A 154-amino-acid chain; its full sequence is Ribosome maturation factor RimP (154 aa).

Belongs to the RimP family.

The protein resides in the cytoplasm. In terms of biological role, required for maturation of 30S ribosomal subunits. The polypeptide is Ribosome maturation factor RimP (Hydrogenobaculum sp. (strain Y04AAS1)).